Here is a 318-residue protein sequence, read N- to C-terminus: Olfactory receptor 2T34 (318 aa).

Topologically, residues 1 to 30 (MCSGNQTSQNQTASTDFTLTGLFAESKHAA) are extracellular. 2 N-linked (GlcNAc...) asparagine glycosylation sites follow: N5 and N10. A helical membrane pass occupies residues 31 to 54 (LLYTVTFLLFLMALTGNALLILLI). At 55 to 62 (HSEPRLHT) the chain is on the cytoplasmic side. A helical membrane pass occupies residues 63-84 (PMYFFISQLALMDLMYLCVTVP). Topologically, residues 85–105 (KMLVGQVTGDDTISPSGCGIQ) are extracellular. A disulfide bridge links C102 with C194. The chain crosses the membrane as a helical span at residues 106-125 (MFFHLTLAGAEVFLLAAMAY). The Cytoplasmic segment spans residues 126–144 (DRYAAVCRPLHYPLLMNQR). The helical transmembrane segment at 145–163 (VCQLLVSACWVLGMVDGLL) threads the bilayer. Residues 164-200 (LTPITMSFPFCQSRKILSFFCETPALLKLSCSDVSLY) lie on the Extracellular side of the membrane. The helical transmembrane segment at 201–224 (KMLTYLCCILMLLTPIMVISSSYT) threads the bilayer. Residues 225–241 (LILHLIHRMNSAAGRRK) lie on the Cytoplasmic side of the membrane. A helical membrane pass occupies residues 242 to 264 (ALATCSSHMIIVLLLFGASFYTY). At 265–277 (MLRSSYHTAEQDM) the chain is on the extracellular side. A helical membrane pass occupies residues 278–297 (MVSAFYTIFTPVLNPLIYSL). Residues 298-318 (RNKDVTRALRSMMQSRMNQEK) are Cytoplasmic-facing.

It belongs to the G-protein coupled receptor 1 family.

The protein resides in the cell membrane. Functionally, odorant receptor. This chain is Olfactory receptor 2T34 (OR2T34), found in Homo sapiens (Human).